A 161-amino-acid chain; its full sequence is Large ribosomal subunit protein bL17 (161 aa).

The segment at 126–161 (TAAKKAPKTRRSRKKATASVAEAPTAEAASEEKAAE) is disordered. Over residues 130–141 (KAPKTRRSRKKA) the composition is skewed to basic residues. Positions 142–153 (TASVAEAPTAEA) are enriched in low complexity.

Belongs to the bacterial ribosomal protein bL17 family. In terms of assembly, part of the 50S ribosomal subunit. Contacts protein L32.

The polypeptide is Large ribosomal subunit protein bL17 (Parabacteroides distasonis (strain ATCC 8503 / DSM 20701 / CIP 104284 / JCM 5825 / NCTC 11152)).